The sequence spans 227 residues: Phosphoribosylformylglycinamidine synthase subunit PurQ (227 aa).

One can recognise a Glutamine amidotransferase type-1 domain in the interval 3–225 (FAVIVFPGSN…LRNWRESHVV (223 aa)). The Nucleophile role is filled by cysteine 86. Active-site residues include histidine 194 and glutamate 196.

Part of the FGAM synthase complex composed of 1 PurL, 1 PurQ and 2 PurS subunits.

Its subcellular location is the cytoplasm. It catalyses the reaction N(2)-formyl-N(1)-(5-phospho-beta-D-ribosyl)glycinamide + L-glutamine + ATP + H2O = 2-formamido-N(1)-(5-O-phospho-beta-D-ribosyl)acetamidine + L-glutamate + ADP + phosphate + H(+). The catalysed reaction is L-glutamine + H2O = L-glutamate + NH4(+). It participates in purine metabolism; IMP biosynthesis via de novo pathway; 5-amino-1-(5-phospho-D-ribosyl)imidazole from N(2)-formyl-N(1)-(5-phospho-D-ribosyl)glycinamide: step 1/2. In terms of biological role, part of the phosphoribosylformylglycinamidine synthase complex involved in the purines biosynthetic pathway. Catalyzes the ATP-dependent conversion of formylglycinamide ribonucleotide (FGAR) and glutamine to yield formylglycinamidine ribonucleotide (FGAM) and glutamate. The FGAM synthase complex is composed of three subunits. PurQ produces an ammonia molecule by converting glutamine to glutamate. PurL transfers the ammonia molecule to FGAR to form FGAM in an ATP-dependent manner. PurS interacts with PurQ and PurL and is thought to assist in the transfer of the ammonia molecule from PurQ to PurL. This is Phosphoribosylformylglycinamidine synthase subunit PurQ from Halalkalibacterium halodurans (strain ATCC BAA-125 / DSM 18197 / FERM 7344 / JCM 9153 / C-125) (Bacillus halodurans).